Consider the following 318-residue polypeptide: Phosphatidylglycerol--prolipoprotein diacylglyceryl transferase (318 aa).

The next 7 helical transmembrane spans lie at 23 to 43, 59 to 79, 98 to 118, 124 to 146, 192 to 212, 219 to 239, and 253 to 273; these read PLTI…GAWL, MDII…YHVI, IWEG…GAAI, GVRL…AMGR, FQPT…LLVF, LGAG…RFIF, and LRVN…VFLI. R146 provides a ligand contact to a 1,2-diacyl-sn-glycero-3-phospho-(1'-sn-glycerol). The span at 293–312 shows a compositional bias: basic and acidic residues; the sequence is FDTRANGHDPEKHDETDGKG. The segment at 293-318 is disordered; the sequence is FDTRANGHDPEKHDETDGKGNRHHVP.

Belongs to the Lgt family.

It is found in the cell membrane. The enzyme catalyses L-cysteinyl-[prolipoprotein] + a 1,2-diacyl-sn-glycero-3-phospho-(1'-sn-glycerol) = an S-1,2-diacyl-sn-glyceryl-L-cysteinyl-[prolipoprotein] + sn-glycerol 1-phosphate + H(+). The protein operates within protein modification; lipoprotein biosynthesis (diacylglyceryl transfer). Its function is as follows. Catalyzes the transfer of the diacylglyceryl group from phosphatidylglycerol to the sulfhydryl group of the N-terminal cysteine of a prolipoprotein, the first step in the formation of mature lipoproteins. In Paenarthrobacter aurescens (strain TC1), this protein is Phosphatidylglycerol--prolipoprotein diacylglyceryl transferase.